The primary structure comprises 1249 residues: Protein transport protein Sec31A (1249 aa).

WD repeat units follow at residues 4-47 (KEID…EIFE), 64-111 (SSSH…AGDK), 120-160 (KHTG…TPMT), 166-206 (QPPE…PIIK), 209-254 (DHSN…SPLR), 258-298 (NHAR…VLYE), and 301-342 (TNTQ…DGLR). The segment at 161–470 (PGAKTQPPED…IDASQTDFEK (310 aa)) is interaction with SEC13. A WD 8; interaction with SEC13 repeat occupies 397–429 (SFSFGGKLVTFENVTGQPQQGAEQPRRQPVFIS). An Asymmetric dimethylarginine modification is found at arginine 423. 2 positions are modified to phosphoserine: serine 526 and serine 531. Residue lysine 647 forms a Glycyl lysine isopeptide (Lys-Gly) (interchain with G-Cter in ubiquitin) linkage. Disordered regions lie at residues 790–829 (QGRS…VQSQ), 842–940 (TTWS…RYPN), and 954–1123 (PHMY…PIGN). Over residues 796–805 (GQESSRSSYE) the composition is skewed to polar residues. Position 799 is a phosphoserine (serine 799). The interaction with PDCD6 stretch occupies residues 800-1142 (SRSSYEGQPL…TEKITKKPIP (343 aa)). The ALG-2-binding site motif-2 (ABS-2) motif lies at 873–879 (GFIMHGN). Residues 898–908 (QPPPYPQPQPY) are compositionally biased toward pro residues. 2 stretches are compositionally biased toward low complexity: residues 961–970 (PASSPTSSSA) and 991–1007 (PSSS…GTPP). Residues 1013–1024 (PASQRTGPQNGW) show a composition bias toward polar residues. Residues 1056–1074 (PGGDPQPQGLQQQPSASGP) are compositionally biased toward low complexity. The residue at position 1190 (threonine 1190) is a Phosphothreonine. Serine 1192 carries the post-translational modification Phosphoserine. Lysine 1246 participates in a covalent cross-link: Glycyl lysine isopeptide (Lys-Gly) (interchain with G-Cter in ubiquitin).

This sequence belongs to the WD repeat SEC31 family. As to quaternary structure, COPII is composed of at least 5 proteins: the SEC23/24 complex, the SEC13/31 complex and SAR1. SEC13 and SEC31 make a 2:2 tetramer that forms the edge element of the COPII outer coat. The tetramer self-assembles in multiple copies to form the complete polyhedral cage. Interacts (via WD 8) with SEC13. Interacts with PDCD6; interaction takes place in response to cytosolic calcium increase and leads to bridge together the BCR(KLHL12) complex and SEC31A, leading to monoubiquitination. Interacts with KLHL12. In terms of processing, monoubiquitinated by the BCR(KLHL12) E3 ubiquitin ligase complex, leading to regulate the size of COPII coats. In terms of tissue distribution, ubiquitously expressed.

The protein resides in the cytoplasm. It localises to the cytoplasmic vesicle. Its subcellular location is the COPII-coated vesicle membrane. The protein localises to the endoplasmic reticulum membrane. Component of the coat protein complex II (COPII) which promotes the formation of transport vesicles from the endoplasmic reticulum (ER). The coat has two main functions, the physical deformation of the endoplasmic reticulum membrane into vesicles and the selection of cargo molecules. In Rattus norvegicus (Rat), this protein is Protein transport protein Sec31A (Sec31a).